A 243-amino-acid polypeptide reads, in one-letter code: Triosephosphate isomerase (243 aa).

Substrate is bound at residue asparagine 9 to lysine 11. Residue histidine 96 is the Electrophile of the active site. The Proton acceptor role is filled by glutamate 165. Residues glycine 171, serine 204, and glycine 225–glycine 226 contribute to the substrate site.

It belongs to the triosephosphate isomerase family. In terms of assembly, homodimer.

The protein localises to the cytoplasm. It catalyses the reaction D-glyceraldehyde 3-phosphate = dihydroxyacetone phosphate. It functions in the pathway carbohydrate biosynthesis; gluconeogenesis. The protein operates within carbohydrate degradation; glycolysis; D-glyceraldehyde 3-phosphate from glycerone phosphate: step 1/1. Its function is as follows. Involved in the gluconeogenesis. Catalyzes stereospecifically the conversion of dihydroxyacetone phosphate (DHAP) to D-glyceraldehyde-3-phosphate (G3P). This chain is Triosephosphate isomerase, found in Parasynechococcus marenigrum (strain WH8102).